A 425-amino-acid polypeptide reads, in one-letter code: Protein cab-1 (425 aa).

Over residues 1-11 the composition is skewed to basic and acidic residues; it reads MRYTFSDEKKA. 2 disordered regions span residues 1–20 and 214–251; these read MRYT…SRAK and LKKT…VPQK. The tract at residues 205 to 424 is AEX-3-binding; sequence ENEIAKESEL…EVCNPNFAAQ (220 aa). The helical transmembrane segment at 300–320 threads the bilayer; sequence LLLLAVGTVMCVGLIGTVAGG. The interval 334 to 355 is disordered; sequence DDGEYAPYAGTGPGFRKNKGNK.

It belongs to the NPDC1/cab-1 family. In terms of assembly, binds to the RAB3 GDP/GTP exchange factor aex-3. Expressed in a variety of neurons.

The protein resides in the membrane. The chain is Protein cab-1 (cab-1) from Caenorhabditis elegans.